A 195-amino-acid chain; its full sequence is Small ribosomal subunit protein uS5 (195 aa).

Residues 22–85 (IVEKLVHINR…EEAKKSMIRV (64 aa)) form the S5 DRBM domain. The tract at residues 164-195 (QVAAKRGKKVSDVIGRRADGASAAQPAADAEG) is disordered. Over residues 172-182 (KVSDVIGRRAD) the composition is skewed to basic and acidic residues. The segment covering 183-195 (GASAAQPAADAEG) has biased composition (low complexity).

Belongs to the universal ribosomal protein uS5 family. As to quaternary structure, part of the 30S ribosomal subunit. Contacts proteins S4 and S8.

With S4 and S12 plays an important role in translational accuracy. In terms of biological role, located at the back of the 30S subunit body where it stabilizes the conformation of the head with respect to the body. The chain is Small ribosomal subunit protein uS5 from Phenylobacterium zucineum (strain HLK1).